The following is a 166-amino-acid chain: Glycine-rich RNA-binding protein GRP1A (166 aa).

The RRM domain occupies 8–86 (YRCFVGGLAW…RSITVNEAQS (79 aa)). The segment at 68–166 (GMNGQDLDGR…YGGSGGGGGW (99 aa)) is disordered. Composition is skewed to gly residues over residues 88 to 146 (GSGG…YGGG) and 153 to 166 (EGGG…GGGW).

Predominantly expressed in meristematic and growing tissue.

It localises to the nucleus. Functionally, may play a general role in circadian phenomena associated with meristematic tissue. The sequence is that of Glycine-rich RNA-binding protein GRP1A from Sinapis alba (White mustard).